The following is a 220-amino-acid chain: Flavin-dependent thymidylate synthase (220 aa).

In terms of domain architecture, ThyX spans 1-208 (MKIDILDKGF…PWTFEAFLKY (208 aa)). FAD contacts are provided by residues T55, 78 to 81 (RHRI), and E86. Residues 75–78 (QWFR), 86–90 (ELSGR), and R147 contribute to the dUMP site. A ThyX motif motif is present at residues 78 to 88 (RHRIASYNELS). FAD-binding positions include 163–165 (NAR) and N169. R174 contributes to the dUMP binding site. Residue R174 is the Involved in ionization of N3 of dUMP, leading to its activation of the active site.

It belongs to the thymidylate synthase ThyX family. In terms of assembly, homotetramer. It depends on FAD as a cofactor.

It carries out the reaction dUMP + (6R)-5,10-methylene-5,6,7,8-tetrahydrofolate + NADPH + H(+) = dTMP + (6S)-5,6,7,8-tetrahydrofolate + NADP(+). It catalyses the reaction dUMP + formaldehyde + NADPH + H(+) = dTMP + NADP(+) + H2O. The protein operates within pyrimidine metabolism; dTTP biosynthesis. In terms of biological role, catalyzes the reductive methylation of 2'-deoxyuridine-5'-monophosphate (dUMP or deoxyuridylate) to 2'-deoxythymidine-5'-monophosphate (dTMP or deoxythymidylate) while utilizing 5,10-methylenetetrahydrofolate (mTHF) as the methylene donor, and NAD(P)H and FADH(2) as the reductant. This reaction is a critical step in DNA biosynthesis. Can also use formaldehyde instead of mTHF as a direct methylene donor for dTMP synthesis. However, the tighter binding of ThyX to mTHF (KD of 4 uM) compared to formaldehyde (KD of 20 mM) confirms that methylene tetrahydrofolate acts as the biological carbon donor for ThyX, serving as a formaldehyde carrier/transporter and thus avoiding genotoxic effects. This is Flavin-dependent thymidylate synthase from Thermotoga maritima (strain ATCC 43589 / DSM 3109 / JCM 10099 / NBRC 100826 / MSB8).